The sequence spans 260 residues: Phosphate import ATP-binding protein PstB 1 (260 aa).

The ABC transporter domain occupies Val-13–Ile-255. Gly-45–Ser-52 lines the ATP pocket.

Belongs to the ABC transporter superfamily. Phosphate importer (TC 3.A.1.7) family. In terms of assembly, the complex is composed of two ATP-binding proteins (PstB), two transmembrane proteins (PstC and PstA) and a solute-binding protein (PstS).

It localises to the cell inner membrane. It catalyses the reaction phosphate(out) + ATP + H2O = ADP + 2 phosphate(in) + H(+). Part of the ABC transporter complex PstSACB involved in phosphate import. Responsible for energy coupling to the transport system. In Chromohalobacter salexigens (strain ATCC BAA-138 / DSM 3043 / CIP 106854 / NCIMB 13768 / 1H11), this protein is Phosphate import ATP-binding protein PstB 1.